Reading from the N-terminus, the 670-residue chain is PML-RARA-regulated adapter molecule 1 (670 aa).

Positions 1-561 (MAHHLPAAME…PQQLPPMDPK (561 aa)) are disordered. Residues 31-43 (DLPKKPPKPEFGK) are compositionally biased toward basic and acidic residues. 4 consecutive repeat copies span residues 70–81 (KPPPPEVTDLPK), 82–93 (KPPPPEVTDLPK), 94–105 (KPPPPEVTDLPK), and 106–117 (KPPPPEVTDLPK). The 4 X 12 AA repeats of K-P-P-[PQ]-P-[EQ]-[VAF]-T-D-L-P-K stretch occupies residues 70-165 (KPPPPEVTDL…SLPEPGAPAR (96 aa)). Over residues 114–129 (DLPKKPSKLELSDLSK) the composition is skewed to basic and acidic residues. Serine 340 carries the phosphoserine modification. Residues 386-398 (SSASESSLPAAVA) are compositionally biased toward low complexity. The segment covering 454-463 (PAKPPLPPGP) has biased composition (pro residues). Acidic residues predominate over residues 504 to 514 (EIYELYDDVEP). Residues 515-528 (RDDSSPSPKGRDEA) are compositionally biased toward basic and acidic residues. In terms of domain architecture, SH3 spans 571–649 (KAEREFRKKF…PRTALLPLET (79 aa)).

Interacts with SKAP2, LCP2 and DBNL. May interact with LYN. Interacts with NEK6. In terms of processing, may be phosphorylated on tyrosines. In terms of tissue distribution, expressed in peripheral blood leukocytes and bone marrow. Expressed in monocytes, and to a lesser extent in granulocytes and lymphocytes. Not expressed in non hematopoietic tissues except in lung.

Its function is as follows. May be involved in myeloid differentiation. May be involved in integrin signaling in neutrophils. Binds to PtdIns(4)P. The polypeptide is PML-RARA-regulated adapter molecule 1 (PRAM1) (Homo sapiens (Human)).